A 233-amino-acid polypeptide reads, in one-letter code: Germin-like protein 3-7 (233 aa).

Positions 1–35 (MSSSSSMECTGNMSAAPLLVLTVAVLAVLASTCAA) are cleaved as a signal peptide. A disulfide bond links cysteine 44 and cysteine 63. Residues 77–225 (AGLAAAGSTD…SFQVDAEIIK (149 aa)) enclose the Cupin type-1 domain. Mn(2+) contacts are provided by histidine 125, histidine 127, glutamate 132, and histidine 171. An N-linked (GlcNAc...) asparagine glycan is attached at asparagine 178.

Belongs to the germin family. Oligomer (believed to be a pentamer but probably hexamer).

It is found in the secreted. The protein localises to the extracellular space. Its subcellular location is the apoplast. Its function is as follows. May play a role in plant defense. Probably has no oxalate oxidase activity even if the active site is conserved. The chain is Germin-like protein 3-7 (GER7) from Oryza sativa subsp. japonica (Rice).